Here is a 180-residue protein sequence, read N- to C-terminus: MTVKEIIIGFLLQIRSILMVFKNIFSKSETKMYPEEKLYLSPRYRGRVILTRNIDGGERCVACNLCAVVCPVDCISLQKSEKKNGRWYPKFFRINFSRCIFCGLCEEACPTAAIQLMPDFELSDFNRQNLVYEKEDLLISGPGKYPDYDFYRFSGVVIKDKKVDKLEGQLKPVNVKDLLP.

4Fe-4S ferredoxin-type domains are found at residues 50 to 80 and 90 to 119; these read LTRNIDGGERCVACNLCAVVCPVDCISLQKS and KFFRINFSRCIFCGLCEEACPTAAIQLMPD. Residues Cys-60, Cys-63, Cys-66, Cys-70, Cys-99, Cys-102, Cys-105, and Cys-109 each contribute to the [4Fe-4S] cluster site.

It belongs to the complex I 23 kDa subunit family. As to quaternary structure, NDH-1 is composed of 13 different subunits. Subunits NuoA, H, J, K, L, M, N constitute the membrane sector of the complex. The cofactor is [4Fe-4S] cluster.

The protein localises to the cell membrane. It carries out the reaction a quinone + NADH + 5 H(+)(in) = a quinol + NAD(+) + 4 H(+)(out). In terms of biological role, NDH-1 shuttles electrons from NADH, via FMN and iron-sulfur (Fe-S) centers, to quinones in the respiratory chain. The immediate electron acceptor for the enzyme in this species is believed to be ubiquinone. Couples the redox reaction to proton translocation (for every two electrons transferred, four hydrogen ions are translocated across the cytoplasmic membrane), and thus conserves the redox energy in a proton gradient. The polypeptide is NADH-quinone oxidoreductase subunit I (Buchnera aphidicola subsp. Schizaphis graminum (strain Sg)).